Reading from the N-terminus, the 314-residue chain is Zinc transporter ZIP3 (314 aa).

The Extracellular portion of the chain corresponds to 1–3; sequence MVK. A helical transmembrane segment spans residues 4–24; sequence LLVAKILCMVGVFFFMLLGSL. Topologically, residues 25–42 are cytoplasmic; that stretch reads LPVKIIETDFEKAHRSKK. The chain crosses the membrane as a helical span at residues 43–63; it reads ILSLCNTFGGGVFLATCFNAL. Topologically, residues 64–85 are extracellular; the sequence is LPAVREKLQKVLSLGHISTDYP. Residues 86 to 106 traverse the membrane as a helical segment; sequence LAETILLLGFFMTVFLEQLIL. Residues 107–169 lie on the Cytoplasmic side of the membrane; sequence TFRKEKPSFI…QGLSRASPVR (63 aa). Phosphoserine is present on residues Ser-125 and Ser-129. The chain crosses the membrane as a helical span at residues 170–190; the sequence is LLSLAFALSAHSVFEGLALGL. At 191-196 the chain is on the extracellular side; the sequence is QEEGEK. Residues 197–217 form a helical membrane-spanning segment; it reads VVSLFVGVAVHETLVAVALGI. The Cytoplasmic segment spans residues 218 to 229; it reads SMARSAMPLRDA. The chain crosses the membrane as a helical span at residues 230 to 250; it reads AKLAVTVSAMIPLGIGLGLGI. The Extracellular segment spans residues 251–262; sequence ESAQGVPGSVAS. Residues 263–283 form a helical membrane-spanning segment; sequence VLLQGLAGGTFLFITFLEILA. The Cytoplasmic portion of the chain corresponds to 284-292; that stretch reads KELEEKSDR. The helical transmembrane segment at 293–313 threads the bilayer; it reads LLKVLFLVLGYTVLAGMVFLK. Residue Trp-314 is a topological domain, extracellular.

Belongs to the ZIP transporter (TC 2.A.5) family.

Its subcellular location is the cell membrane. The protein resides in the apical cell membrane. The catalysed reaction is Zn(2+)(in) = Zn(2+)(out). Functionally, transporter for the divalent cation Zn(2+). Mediates the influx of Zn(2+) into cells from extracellular space. Controls Zn(2+) accumulation into dentate gyrus granule cells in the hippocampus. Mediates Zn(2+) reuptake from the secreted milk within the alveolar lumen. The polypeptide is Zinc transporter ZIP3 (Homo sapiens (Human)).